The following is a 214-amino-acid chain: Ribosomal RNA large subunit methyltransferase E (214 aa).

Residues glycine 68, tryptophan 70, aspartate 88, aspartate 104, and aspartate 129 each coordinate S-adenosyl-L-methionine. Lysine 169 (proton acceptor) is an active-site residue.

The protein belongs to the class I-like SAM-binding methyltransferase superfamily. RNA methyltransferase RlmE family.

It is found in the cytoplasm. It carries out the reaction uridine(2552) in 23S rRNA + S-adenosyl-L-methionine = 2'-O-methyluridine(2552) in 23S rRNA + S-adenosyl-L-homocysteine + H(+). Its function is as follows. Specifically methylates the uridine in position 2552 of 23S rRNA at the 2'-O position of the ribose in the fully assembled 50S ribosomal subunit. This is Ribosomal RNA large subunit methyltransferase E from Magnetococcus marinus (strain ATCC BAA-1437 / JCM 17883 / MC-1).